The chain runs to 114 residues: Large ribosomal subunit protein uL24 (114 aa).

Belongs to the universal ribosomal protein uL24 family. As to quaternary structure, part of the 50S ribosomal subunit.

One of two assembly initiator proteins, it binds directly to the 5'-end of the 23S rRNA, where it nucleates assembly of the 50S subunit. Functionally, one of the proteins that surrounds the polypeptide exit tunnel on the outside of the subunit. The protein is Large ribosomal subunit protein uL24 of Thermomicrobium roseum (strain ATCC 27502 / DSM 5159 / P-2).